We begin with the raw amino-acid sequence, 371 residues long: Putative glutamate--cysteine ligase 2 (371 aa).

This sequence belongs to the glutamate--cysteine ligase type 2 family. YbdK subfamily.

It catalyses the reaction L-cysteine + L-glutamate + ATP = gamma-L-glutamyl-L-cysteine + ADP + phosphate + H(+). ATP-dependent carboxylate-amine ligase which exhibits weak glutamate--cysteine ligase activity. This chain is Putative glutamate--cysteine ligase 2, found in Burkholderia ambifaria (strain MC40-6).